The primary structure comprises 577 residues: Pentatricopeptide repeat-containing protein At2g01390 (577 aa).

PPR repeat units follow at residues 121–155 (DHFTYTTMLDIFGEAGRIQSMYSVFHLMKEKGVLI), 156–190 (DTVTYTSLIHWVSSSGDVDGAMRLWEEMRDNGCEP), 191–225 (TVVSYTAYMKMLFADGRVEEATEVYKEMLRSRVSP), 226–260 (NCHTYTVLMEYLVATGKCEEALDIFFKMQEIGVQP), 261–295 (DKAACNILIAKALKFGETSFMTRVLVYMKENGVVL), 382–416 (DSFVVSAIIETNCDRCRTEGASLAFDYSLEMGIHL), 417–451 (KKSAYLALIGNFLRSNELPKVIEVVKEMVKAQHSL), 452–482 (GCYQGAMLIHRLGFGRRPRLAADVFDLLPDD), 485–519 (GVAAYTALMDVYISAGSPEKAMKILREMREREIMP), and 520–554 (SLGTYDVLLSGLEKTSDFQKEVALLRKEKKSLVAS).

Belongs to the PPR family. P subfamily.

The protein is Pentatricopeptide repeat-containing protein At2g01390 of Arabidopsis thaliana (Mouse-ear cress).